Here is a 463-residue protein sequence, read N- to C-terminus: Chromosomal replication initiator protein DnaA (463 aa).

A domain I, interacts with DnaA modulators region spans residues 1–83 (MSTNQIILTD…LQLFQHYNNT (83 aa)). Residues 83–124 (TIKSIEIITKELPGITQTVIALPTKTFADIGSSELNAENIFS) are domain II. The tract at residues 125–343 (TLDVRFTFDN…GALNKVIAHS (219 aa)) is domain III, AAA+ region. 4 residues coordinate ATP: glycine 171, glycine 173, lysine 174, and threonine 175. The tract at residues 344–463 (NFTLKEITLE…INLLMKILQN (120 aa)) is domain IV, binds dsDNA.

This sequence belongs to the DnaA family. In terms of assembly, oligomerizes as a right-handed, spiral filament on DNA at oriC.

The protein localises to the cytoplasm. Its function is as follows. Plays an essential role in the initiation and regulation of chromosomal replication. ATP-DnaA binds to the origin of replication (oriC) to initiate formation of the DNA replication initiation complex once per cell cycle. Binds the DnaA box (a 9 base pair repeat at the origin) and separates the double-stranded (ds)DNA. Forms a right-handed helical filament on oriC DNA; dsDNA binds to the exterior of the filament while single-stranded (ss)DNA is stabiized in the filament's interior. The ATP-DnaA-oriC complex binds and stabilizes one strand of the AT-rich DNA unwinding element (DUE), permitting loading of DNA polymerase. After initiation quickly degrades to an ADP-DnaA complex that is not apt for DNA replication. Binds acidic phospholipids. The polypeptide is Chromosomal replication initiator protein DnaA (Rickettsia massiliae (strain Mtu5)).